A 376-amino-acid chain; its full sequence is DNA polymerase IV (376 aa).

Positions 6-187 (IIHIDMDAFF…LSIGKFYGVG (182 aa)) constitute a UmuC domain. Residues Asp-10 and Asp-105 each coordinate Mg(2+). Glu-106 is a catalytic residue.

It belongs to the DNA polymerase type-Y family. As to quaternary structure, monomer. It depends on Mg(2+) as a cofactor.

The protein localises to the cytoplasm. The enzyme catalyses DNA(n) + a 2'-deoxyribonucleoside 5'-triphosphate = DNA(n+1) + diphosphate. Poorly processive, error-prone DNA polymerase involved in untargeted mutagenesis. Copies undamaged DNA at stalled replication forks, which arise in vivo from mismatched or misaligned primer ends. These misaligned primers can be extended by PolIV. Exhibits no 3'-5' exonuclease (proofreading) activity. May be involved in translesional synthesis, in conjunction with the beta clamp from PolIII. The sequence is that of DNA polymerase IV from Desulfotalea psychrophila (strain LSv54 / DSM 12343).